Reading from the N-terminus, the 663-residue chain is Spore germination protein GerIA (663 aa).

The segment covering 1-13 has biased composition (basic residues); it reads MIWNWLRKKKKSN. Residues 1–175 are disordered; sequence MIWNWLRKKK…SGGNSIYDFT (175 aa). Residues 47 to 56 show a composition bias toward basic and acidic residues; it reads KNNEQKDSSQ. 3 stretches are compositionally biased toward low complexity: residues 57-72, 88-101, and 122-150; these read DKQQ…QDKQ and PKQG…QQSA. 5 helical membrane passes run 414–434, 451–471, 491–511, 541–561, and 578–598; these read IFVD…DFFI, ILRL…VAVL, AQVP…IDLL, AGLT…ASFI, and FLAF…IFLF.

It belongs to the GerABKA family.

It is found in the cell membrane. Its function is as follows. Required for inosine germination. The chain is Spore germination protein GerIA (gerIA) from Bacillus cereus.